Reading from the N-terminus, the 349-residue chain is tRNA pseudouridine synthase D (349 aa).

Residue Phe27 coordinates substrate. Catalysis depends on Asp80, which acts as the Nucleophile. Substrate is bound at residue Asn129. One can recognise a TRUD domain in the interval 155–303 (GVPNYFGAQR…VEAARRAMLL (149 aa)). Substrate is bound at residue Phe329.

The protein belongs to the pseudouridine synthase TruD family.

It carries out the reaction uridine(13) in tRNA = pseudouridine(13) in tRNA. Its function is as follows. Responsible for synthesis of pseudouridine from uracil-13 in transfer RNAs. The sequence is that of tRNA pseudouridine synthase D from Escherichia fergusonii (strain ATCC 35469 / DSM 13698 / CCUG 18766 / IAM 14443 / JCM 21226 / LMG 7866 / NBRC 102419 / NCTC 12128 / CDC 0568-73).